Reading from the N-terminus, the 898-residue chain is Chaperone protein ClpB 1 (898 aa).

The Clp R domain maps to 6 to 148; that stretch reads PTKFTEQAWD…ELAIKAIRGS (143 aa). 2 repeat regions span residues 9–74 and 85–148; these read FTEQ…TNRQ and LGRS…IRGS. The segment at 161–344 is NBD1; sequence EALDKYGRDL…RRFQQVYVKQ (184 aa). 208 to 215 is an ATP binding site; sequence GEPGVGKT. A linker region spans residues 345–560; sequence PSVDDTISIL…IAEIVAGWTG (216 aa). Residues 395-536 adopt a coiled-coil conformation; the sequence is IDLVDEAAAR…KESKLLEIQG (142 aa). The NBD2 stretch occupies residues 570–781; that stretch reads ERQKLLQLEG…RIDDLIIFHT (212 aa). 620-627 provides a ligand contact to ATP; the sequence is GPTGVGKT. Residues 782-898 form a C-terminal region; sequence LKRDELRRIV…TAVEVEVLSS (117 aa).

It belongs to the ClpA/ClpB family. In terms of assembly, homohexamer. The oligomerization is ATP-dependent.

Its subcellular location is the cytoplasm. Functionally, part of a stress-induced multi-chaperone system, it is involved in the recovery of the cell from heat-induced damage, in cooperation with DnaK, DnaJ and GrpE. Acts before DnaK, in the processing of protein aggregates. Protein binding stimulates the ATPase activity; ATP hydrolysis unfolds the denatured protein aggregates, which probably helps expose new hydrophobic binding sites on the surface of ClpB-bound aggregates, contributing to the solubilization and refolding of denatured protein aggregates by DnaK. This chain is Chaperone protein ClpB 1 (clpB1), found in Synechocystis sp. (strain ATCC 27184 / PCC 6803 / Kazusa).